The following is a 151-amino-acid chain: HTH-type transcriptional regulator FL11 (151 aa).

In terms of domain architecture, HTH asnC-type spans leucine 5–asparagine 66. A DNA-binding region (H-T-H motif) is located at residues leucine 24 to lysine 43. Glutamate 98–aspartate 104 lines the L-arginine pocket. L-lysine is bound by residues asparagine 118, aspartate 122, and threonine 133–threonine 135. L-arginine contacts are provided by residues aspartate 122 and threonine 133–threonine 135.

Homodimer. Binds DNA as a dimer and an octamer.

Its activity is regulated as follows. In the famine mode, FL11 forms dimers and acts as a repressor, leading to growth arrest. In the feast mode, in the presence of high concentrations of lysine or arginine, four dimers assemble into an octamer and cover the fl11 and lysine biosynthesis promoters. This leads to the inhibition of fl11 expression and lysine biosynthesis, decrease of the FL11 concentration in the cell, derepression of the target genes and activation of the metabolism. Its function is as follows. DNA-binding protein involved in the repression of transcription of a large number of genes, thereby arresting growth, in response to environmental changes. This chain is HTH-type transcriptional regulator FL11, found in Pyrococcus furiosus (strain ATCC 43587 / DSM 3638 / JCM 8422 / Vc1).